We begin with the raw amino-acid sequence, 558 residues long: Pyrethroid hydrolase Ces2a (558 aa).

A signal peptide spans 1–26 (MPLARLPGWLCVVACGLLLLLQHVHG). A disulfide bond links Cys95 and Cys122. Lys209 bears the N6-succinyllysine mark. Residue Ser227 is the Acyl-ester intermediate of the active site. N-linked (GlcNAc...) asparagine glycosylation occurs at Asn275. Cysteines 279 and 290 form a disulfide. N6-succinyllysine is present on Lys296. Residue Glu344 is the Charge relay system of the active site. An N-linked (GlcNAc...) asparagine glycan is attached at Asn361. The active-site Charge relay system is the His456.

The protein belongs to the type-B carboxylesterase/lipase family.

It localises to the microsome. It catalyses the reaction (-)-trans-permethrin + H2O = (3-phenoxyphenyl)methanol + (1S,3R)-3-(2,2-dichlorovinyl)-2,2-dimethylcyclopropanecarboxylate + H(+). The catalysed reaction is all-trans-retinyl hexadecanoate + H2O = all-trans-retinol + hexadecanoate + H(+). Its function is as follows. Carboxylesterases that catalyzes the hydrolysis of pyrethroids pesticides. Hydrolyzes permethrin faster than cypermethrin. Hydrolyzes retinyl esters. The polypeptide is Pyrethroid hydrolase Ces2a (Mus musculus (Mouse)).